We begin with the raw amino-acid sequence, 152 residues long: Heavy metal-associated isoprenylated plant protein 22 (152 aa).

The HMA domain occupies 28-91; that stretch reads MQTVNIKVKI…TVQSTGKKKA (64 aa). Cys39 and Cys42 together coordinate a metal cation. A disordered region spans residues 123-152; that stretch reads SEQAQAQPGSTDDKLMSLFSDENPNACTVM. Over residues 142 to 152 the composition is skewed to polar residues; the sequence is SDENPNACTVM. Cys149 carries the cysteine methyl ester modification. The S-farnesyl cysteine moiety is linked to residue Cys149. The propeptide at 150–152 is removed in mature form; sequence TVM.

Belongs to the HIPP family. As to quaternary structure, interacts with ZHD11/HB29. In terms of tissue distribution, expressed in lateral roots and mature anthers.

Its subcellular location is the membrane. Functionally, heavy-metal-binding protein. Binds cadmium. May be involved in cadmium transport and play a role in cadmium detoxification. This is Heavy metal-associated isoprenylated plant protein 22 from Arabidopsis thaliana (Mouse-ear cress).